The following is a 232-amino-acid chain: Ribosomal RNA small subunit methyltransferase G (232 aa).

S-adenosyl-L-methionine-binding positions include G93, L98, V144–E145, and R163.

This sequence belongs to the methyltransferase superfamily. RNA methyltransferase RsmG family.

Its subcellular location is the cytoplasm. The catalysed reaction is guanosine(527) in 16S rRNA + S-adenosyl-L-methionine = N(7)-methylguanosine(527) in 16S rRNA + S-adenosyl-L-homocysteine. Specifically methylates the N7 position of guanine in position 527 of 16S rRNA. The sequence is that of Ribosomal RNA small subunit methyltransferase G from Burkholderia pseudomallei (strain 668).